The primary structure comprises 350 residues: Tetraacyldisaccharide 4'-kinase (350 aa).

ATP is bound at residue 49–56 (TTGGTGKT).

It belongs to the LpxK family.

The catalysed reaction is a lipid A disaccharide + ATP = a lipid IVA + ADP + H(+). The protein operates within glycolipid biosynthesis; lipid IV(A) biosynthesis; lipid IV(A) from (3R)-3-hydroxytetradecanoyl-[acyl-carrier-protein] and UDP-N-acetyl-alpha-D-glucosamine: step 6/6. Functionally, transfers the gamma-phosphate of ATP to the 4'-position of a tetraacyldisaccharide 1-phosphate intermediate (termed DS-1-P) to form tetraacyldisaccharide 1,4'-bis-phosphate (lipid IVA). The protein is Tetraacyldisaccharide 4'-kinase of Chlorobaculum tepidum (strain ATCC 49652 / DSM 12025 / NBRC 103806 / TLS) (Chlorobium tepidum).